The chain runs to 490 residues: CUGBP Elav-like family member 1 (490 aa).

RRM domains are found at residues 16–99 and 108–188; these read IKMF…PADS and RKLF…FADT. Positions 283–312 are disordered; the sequence is PSAGSALTTSSSPLSILTSSGSSPSSNNNS. The RRM 3 domain occupies 405–483; the sequence is ANLFIYHLPQ…KRLKVQLKRS (79 aa).

Belongs to the CELF/BRUNOL family. As to quaternary structure, oligomer. Oligomerization is required for RNA-binding and EDEN-dependent deadenylation. Post-translationally, phosphorylated during oocyte maturation and dephosphorylated following egg activation. Dephosphorylation is calcium dependent and correlates with the increase in the activity of EDEN-dependent deadenylation.

The protein localises to the nucleus. It is found in the cytoplasm. Functionally, RNA-binding protein implicated in the regulation of several post-transcriptional events. May be involved in pre-mRNA alternative splicing, mRNA translation activation and stability. Mediates the rapid and sequence-specific cytoplasmic deadenylation of EDEN-containing maternal mRNAs following fertilization. Binds to AU-rich sequences (AREs) of jun mRNA. Binds to the embryonic deadenylation element (EDEN) motif localized in the 3'-UTR of maternal mRNAs. Binds to RNA containing several repeats of the consensus sequence 5'-UGU-3'. EDEN-dependent deadenylation is enhanced by the presence of an additional cis element composed of three AUU repeats. The polypeptide is CUGBP Elav-like family member 1 (celf1) (Xenopus tropicalis (Western clawed frog)).